A 134-amino-acid chain; its full sequence is Profilin-3 (134 aa).

An intrachain disulfide couples C13 to C118. The Involved in PIP2 interaction signature appears at 84–100 (AVIRGKKGSGGITIKKT). T114 is modified (phosphothreonine).

Belongs to the profilin family. In terms of assembly, occurs in many kinds of cells as a complex with monomeric actin in a 1:1 ratio. Phosphorylated by MAP kinases.

It is found in the cytoplasm. The protein localises to the cytoskeleton. Functionally, binds to actin and affects the structure of the cytoskeleton. At high concentrations, profilin prevents the polymerization of actin, whereas it enhances it at low concentrations. The sequence is that of Profilin-3 from Olea europaea (Common olive).